A 271-amino-acid polypeptide reads, in one-letter code: Cartilage-associated protein (271 aa).

The N-terminal stretch at 1–15 (MWRTLLAALLATAGA) is a signal peptide. The N-linked (GlcNAc...) asparagine glycan is linked to Asn-76.

It belongs to the leprecan family. In terms of tissue distribution, found in articular chondrocytes. Expressed in a variety of tissues.

Its subcellular location is the secreted. It localises to the extracellular space. It is found in the extracellular matrix. Functionally, necessary for efficient 3-hydroxylation of fibrillar collagen prolyl residues. In Gallus gallus (Chicken), this protein is Cartilage-associated protein (CRTAP).